A 274-amino-acid chain; its full sequence is MTPEQSPLGKASTYTEQYDASLLFPIARKNAREAIGIGAQLPFFGTDIWNAYELSWLNARGKPQIAVATFFVPADSPNIVESKSFKLYLGSFAQTAFESMDAVRDTIRRDVSASCGATVSVHLTAPYKFGKLQMEEFEGLSLDRLDLDTDVYQPDASLLKAALHEAPVEETVFSNLLKSNCPVTGQPDWGSVQIHYVGPQIDHAGLLRYIISYRNHTGFHEQCVERIFVDVLKACKPVKLAVYARYTRRGGLDINPFRTNYNLPMPDNMRLARQ.

Residue 80–82 (VES) participates in substrate binding. Residue 82–83 (SK) coordinates NADPH. Catalysis depends on Cys-181, which acts as the Thioimide intermediate. The Proton donor role is filled by Asp-188. Substrate is bound at residue 220 to 221 (HE). 249-250 (RG) is a binding site for NADPH.

Belongs to the GTP cyclohydrolase I family. QueF type 2 subfamily. In terms of assembly, homodimer.

It localises to the cytoplasm. The catalysed reaction is 7-aminomethyl-7-carbaguanine + 2 NADP(+) = 7-cyano-7-deazaguanine + 2 NADPH + 3 H(+). Its pathway is tRNA modification; tRNA-queuosine biosynthesis. Functionally, catalyzes the NADPH-dependent reduction of 7-cyano-7-deazaguanine (preQ0) to 7-aminomethyl-7-deazaguanine (preQ1). This chain is NADPH-dependent 7-cyano-7-deazaguanine reductase, found in Paraburkholderia xenovorans (strain LB400).